The chain runs to 138 residues: Basic leucine zipper 8 (138 aa).

The tract at residues 30–67 is disordered; sequence NLPATSDDSSRTAEDNERKRRRKVSNRESARRSRMRKQ. A compositionally biased stretch (basic and acidic residues) spans 37–47; it reads DSSRTAEDNER. In terms of domain architecture, bZIP spans 45–108; the sequence is NERKRRRKVS…EKVIEENMKL (64 aa). The basic motif stretch occupies residues 47–68; it reads RKRRRKVSNRESARRSRMRKQR. A Nuclear localization signal motif is present at residues 48-55; sequence KRRRKVSN. Residues 73–87 are leucine-zipper; sequence LWSMLVQLINKNKSL.

This sequence belongs to the bZIP family. In terms of assembly, homodimer.

It is found in the nucleus. The sequence is that of Basic leucine zipper 8 from Arabidopsis thaliana (Mouse-ear cress).